Consider the following 118-residue polypeptide: V-type proton ATPase subunit G 2 (118 aa).

A disordered region spans residues 26 to 90; sequence RKRKARRLKQ…VQGMQSSQQR (65 aa). Basic and acidic residues predominate over residues 35–55; the sequence is QAKEEAQMEVEQYRREREQEF. 2 stretches are compositionally biased toward polar residues: residues 56 to 69 and 78 to 89; these read QSKQ…QGNL and RRQVQGMQSSQQ.

The protein belongs to the V-ATPase G subunit family. V-ATPase is a heteromultimeric enzyme made up of two complexes: the ATP-hydrolytic V1 complex and the proton translocation V0 complex. The V1 complex consists of three catalytic AB heterodimers that form a heterohexamer, three peripheral stalks each consisting of EG heterodimers, one central rotor including subunits D and F, and the regulatory subunits C and H. The proton translocation complex V0 consists of the proton transport subunit a, a ring of proteolipid subunits c9c'', rotary subunit d, subunits e and f, and the accessory subunits ATP6AP1/Ac45 and ATP6AP2/PRR.

It is found in the melanosome. Its subcellular location is the cytoplasmic vesicle. It localises to the clathrin-coated vesicle membrane. Subunit of the V1 complex of vacuolar(H+)-ATPase (V-ATPase), a multisubunit enzyme composed of a peripheral complex (V1) that hydrolyzes ATP and a membrane integral complex (V0) that translocates protons. V-ATPase is responsible for acidifying and maintaining the pH of intracellular compartments and in some cell types, is targeted to the plasma membrane, where it is responsible for acidifying the extracellular environment. This Sus scrofa (Pig) protein is V-type proton ATPase subunit G 2 (ATP6V1G2).